The sequence spans 757 residues: Subtilisin-like protease SBT1.7 (757 aa).

An N-terminal signal peptide occupies residues 1–24 (MSSSFLSSTAFFLLLCLGFCHVSS). The propeptide occupies 25 to 106 (SSSDQGTYIV…VLPEHRYELH (82 aa)). The 76-residue stretch at 31–106 (TYIVHMAKSQ…VLPEHRYELH (76 aa)) folds into the Inhibitor I9 domain. The Peptidase S8 domain occupies 102–610 (RYELHTTRTP…AGHVSPTTAT (509 aa)). The active-site Charge relay system is the Asp-139. Residue Asn-170 is glycosylated (N-linked (GlcNAc...) asparagine). The disordered stretch occupies residues 196–219 (PIDESKESRSPRDDDGHGTHTSST). Residues 198–213 (DESKESRSPRDDDGHG) are compositionally biased toward basic and acidic residues. His-212 (charge relay system) is an active-site residue. N-linked (GlcNAc...) asparagine glycans are attached at residues Asn-352, Asn-376, and Asn-379. The Charge relay system role is filled by Ser-542. 2 N-linked (GlcNAc...) asparagine glycosylation sites follow: Asn-631 and Asn-644.

This sequence belongs to the peptidase S8 family. Expressed in immature siliques and at lower levels in stems and flowers. Widely expressed at low levels.

It localises to the secreted. The protein localises to the cell wall. Activated by calcium. Inhibited by the serine protease inhibitors 4-(2-aminoethyl)benzenesulphonyl fluoride (AEBSF), PMSF, di-isopropyl phosphofluoridate (DFP) and soybean trypsin inhibitor (SBTI). Not inhibited by benzamidine or iodoacetamide. Leupeptin and pepstatin A have a minor inhibitory action. Serine protease. Has a substrate preference for the hydrophobic residues Phe and Ala and the basic residue Asp in the P1 position, and for Asp, Leu or Ala in the P1' position. Essential for mucilage release from seed coats. Triggers the accumulation and/or activation of cell wall modifying enzymes necessary either for the loosening of the outer primary cell wall, or to facilitate swelling of the mucilage. This Arabidopsis thaliana (Mouse-ear cress) protein is Subtilisin-like protease SBT1.7.